A 593-amino-acid chain; its full sequence is Gamma-humulene synthase (593 aa).

The span at 1–26 (MAQISESVSPSTDLKSTESSITSNRH) shows a compositional bias: polar residues. The segment at 1–34 (MAQISESVSPSTDLKSTESSITSNRHGNMWEDDR) is disordered. 4 residues coordinate Mg(2+): Asp-343, Asp-347, Asp-488, and Glu-496. The short motif at 343–347 (DDLYD) is the DDXXD motif element.

The protein belongs to the terpene synthase family. Tpsd subfamily. Mg(2+) serves as cofactor. The cofactor is K(+).

Its subcellular location is the cytoplasm. The enzyme catalyses (2E,6E)-farnesyl diphosphate = gamma-humulene + diphosphate. It carries out the reaction (2E,6E)-farnesyl diphosphate = sibirene + diphosphate. The catalysed reaction is (2E,6E)-farnesyl diphosphate = longifolene + diphosphate. It catalyses the reaction (2E,6E)-farnesyl diphosphate = beta-himachalene + diphosphate. The enzyme catalyses (2E,6E)-farnesyl diphosphate = gamma-himachalene + diphosphate. It carries out the reaction (2E,6E)-farnesyl diphosphate = alpha-himachalene + diphosphate. It functions in the pathway terpene metabolism; oleoresin biosynthesis. Involved in defensive oleoresin formation in conifers in response to insect attack or other injury. Involved in 52 sesquiterpene (C15) olefins biosynthesis. The protein is Gamma-humulene synthase (ag5) of Abies grandis (Grand fir).